Consider the following 62-residue polypeptide: Large ribosomal subunit protein bL32 (62 aa).

Residues 1-16 (MAVPKRKTSPMKRGFR) show a composition bias toward basic residues. A disordered region spans residues 1–62 (MAVPKRKTSP…QILTPKNKEA (62 aa)). The segment covering 28-44 (VEDKDSGELRRPHHVDL) has biased composition (basic and acidic residues).

The protein belongs to the bacterial ribosomal protein bL32 family.

The chain is Large ribosomal subunit protein bL32 from Methylocella silvestris (strain DSM 15510 / CIP 108128 / LMG 27833 / NCIMB 13906 / BL2).